The chain runs to 311 residues: MSTFSLKIIRVGITVLVVVLAVIAIFNVWAFYTESPWTRDAKFTADVVAIAPDVSGLLTEVPVKDNQLVQKGQILFVIDQPRYQQALAEAEADVAYYQTLAAEKQREFSRRHLLGIQALSQEEIDQASNVLQTVQHQLAKTIAVRNLARLDLERTTIRAPAEGWVTNLNVHAGEFINRGATAVALVKKDTFYILAYLEETKLEGVKPGYRAEITPLGSNRILHGTVDSISAGVTNSSSSADSKGLATIDNNLEWVRLAQRVPVKIHLDSEDQQYLYPAGTTATVVITGPNDRDPHQASPMTKLMHRLREFG.

A helical membrane pass occupies residues 11–31; the sequence is VGITVLVVVLAVIAIFNVWAF.

The protein belongs to the membrane fusion protein (MFP) (TC 8.A.1) family.

It localises to the cell inner membrane. Forms an efflux pump with AaeB. The sequence is that of p-hydroxybenzoic acid efflux pump subunit AaeA from Yersinia pseudotuberculosis serotype O:1b (strain IP 31758).